We begin with the raw amino-acid sequence, 247 residues long: Aliphatic sulfonates import ATP-binding protein SsuB 1 (247 aa).

The ABC transporter domain maps to 7–222 (LSLSGVHKSF…KRSSYEFVET (216 aa)). Residue 39-46 (GKSGCGKS) participates in ATP binding.

The protein belongs to the ABC transporter superfamily. Aliphatic sulfonates importer (TC 3.A.1.17.2) family. In terms of assembly, the complex is composed of two ATP-binding proteins (SsuB), two transmembrane proteins (SsuC) and a solute-binding protein (SsuA).

The protein resides in the cell membrane. It carries out the reaction ATP + H2O + aliphatic sulfonate-[sulfonate-binding protein]Side 1 = ADP + phosphate + aliphatic sulfonateSide 2 + [sulfonate-binding protein]Side 1.. In terms of biological role, part of the ABC transporter complex SsuABC involved in aliphatic sulfonates import. Responsible for energy coupling to the transport system. In Shouchella clausii (strain KSM-K16) (Alkalihalobacillus clausii), this protein is Aliphatic sulfonates import ATP-binding protein SsuB 1.